Reading from the N-terminus, the 105-residue chain is Serine protease inhibitor Kazal-type 6 (105 aa).

The first 23 residues, 1–23 (MKVAGVFLLLSLALLCFFSGAFS), serve as a signal peptide directing secretion. A Pyrrolidone carboxylic acid modification is found at Gln24. One can recognise a Kazal-like domain in the interval 49–105 (RLFQINCGEFRDPKVFCTRESDPLCGSDGQTYGNKCAFCKALEKSSGKINLKHRGKC). Disulfide bonds link Cys55-Cys87, Cys65-Cys84, and Cys73-Cys105.

As to expression, expressed in the upper epidermis and in skin appendages.

The protein resides in the secreted. Serine protease inhibitor selective for kallikreins. Efficiently inhibits KLK5 and human KLK2, KLK4, KLK5, KLK6, KLK7, KLK12, KLK13 and KLK14. Doesn't inhibit human KLK1 and KLK8. This chain is Serine protease inhibitor Kazal-type 6 (Spink6), found in Mus musculus (Mouse).